The chain runs to 579 residues: Vitamin B6 transporter TPN1 (579 aa).

At 1 to 98 the chain is on the cytoplasmic side; sequence MNRDNMDTTK…LHVAGLWLSA (98 aa). Residues 99 to 119 traverse the membrane as a helical segment; the sequence is TGGLSSMSSFLLGPLLFGLSF. The Extracellular portion of the chain corresponds to 120–122; that stretch reads RES. A helical membrane pass occupies residues 123–143; sequence VASSLISVTIGCLIAAYCSIM. At 144–157 the chain is on the cytoplasmic side; sequence GPQSGCRQMVTARY. A helical membrane pass occupies residues 158–178; sequence LFGWWFVKLVALASIIGVMGW. Topologically, residues 179–198 are extracellular; the sequence is SVVNSVVGGEMLAAISNDKV. The chain crosses the membrane as a helical span at residues 199–219; that stretch reads PLWVGIVIVTVCSFLVAIFGI. Residues 220–221 lie on the Cytoplasmic side of the membrane; that stretch reads KQ. A helical membrane pass occupies residues 222–242; it reads VIKVETYLSVPVLTAFLLLYI. The Extracellular segment spans residues 243 to 274; it reads SSSDKYSFVNAYVSKGNLDSSTRKGNWMSFFS. The helical transmembrane segment at 275-295 threads the bilayer; sequence LCYSITATWGSITADYYILFP. At 296–302 the chain is on the cytoplasmic side; that stretch reads EDTPYIQ. Residues 303 to 323 traverse the membrane as a helical segment; it reads IFCLTFFGTFLPTCFVGILGL. Over 324-362 the chain is Extracellular; that stretch reads LLASVAMSYKPWSVEYDSHGMGGLLWAGFQRWNGFGKFC. A helical transmembrane segment spans residues 363–383; sequence VVVLVFSLVSNNIINTYSAAF. Residues 384–394 are Cytoplasmic-facing; it reads SIQLSSVFCAK. The chain crosses the membrane as a helical span at residues 395-415; sequence IPRWFWSIVCTIICLVCALIG. At 416–421 the chain is on the extracellular side; the sequence is RNHFST. Residues 422 to 442 form a helical membrane-spanning segment; it reads ILGNFLPMIGYWISMYFILLF. The Cytoplasmic segment spans residues 443-519; the sequence is EENLVFRRFF…EVLTHGYAAT (77 aa). The chain crosses the membrane as a helical span at residues 520-540; that stretch reads FAFIVGVAGVVVGMAQAYWIG. The Extracellular segment spans residues 541–545; that stretch reads PIAAK. The helical transmembrane segment at 546 to 566 threads the bilayer; it reads FGEYGGDVAMWLSMAFSGVVY. Residues 567-579 lie on the Cytoplasmic side of the membrane; the sequence is PPCRYLELRKFGR.

Belongs to the purine-cytosine permease (2.A.39) family.

It is found in the membrane. In terms of biological role, thiamine-regulated, high affinity import carrier of pyridoxine, pyridoxal and pyridoxamine. The chain is Vitamin B6 transporter TPN1 (TPN1) from Saccharomyces cerevisiae (strain ATCC 204508 / S288c) (Baker's yeast).